The primary structure comprises 355 residues: GTPase Obg (355 aa).

Residues 1–159 enclose the Obg domain; sequence MKLVDEAEIL…RLLKLELKLL (159 aa). Positions 160–342 constitute an OBG-type G domain; that stretch reads ADVGLLGFPN…IMKDVMAFFD (183 aa). GTP contacts are provided by residues 166–173, 191–195, 213–216, 292–295, and 323–325; these read GFPNAGKS, FTTLY, DVPG, NKAD, and SAL. Positions 173 and 193 each coordinate Mg(2+).

The protein belongs to the TRAFAC class OBG-HflX-like GTPase superfamily. OBG GTPase family. In terms of assembly, monomer. Mg(2+) serves as cofactor.

Its subcellular location is the cytoplasm. In terms of biological role, an essential GTPase which binds GTP, GDP and possibly (p)ppGpp with moderate affinity, with high nucleotide exchange rates and a fairly low GTP hydrolysis rate. Plays a role in control of the cell cycle, stress response, ribosome biogenesis and in those bacteria that undergo differentiation, in morphogenesis control. This is GTPase Obg from Xanthomonas axonopodis pv. citri (strain 306).